The sequence spans 497 residues: Probable cytosol aminopeptidase (497 aa).

2 residues coordinate Mn(2+): Lys-267 and Asp-272. Lys-279 is a catalytic residue. Residues Asp-290, Asp-349, and Glu-351 each coordinate Mn(2+). Residue Arg-353 is part of the active site.

Belongs to the peptidase M17 family. Requires Mn(2+) as cofactor.

The protein resides in the cytoplasm. It carries out the reaction Release of an N-terminal amino acid, Xaa-|-Yaa-, in which Xaa is preferably Leu, but may be other amino acids including Pro although not Arg or Lys, and Yaa may be Pro. Amino acid amides and methyl esters are also readily hydrolyzed, but rates on arylamides are exceedingly low.. The catalysed reaction is Release of an N-terminal amino acid, preferentially leucine, but not glutamic or aspartic acids.. Presumably involved in the processing and regular turnover of intracellular proteins. Catalyzes the removal of unsubstituted N-terminal amino acids from various peptides. This is Probable cytosol aminopeptidase from Syntrophotalea carbinolica (strain DSM 2380 / NBRC 103641 / GraBd1) (Pelobacter carbinolicus).